We begin with the raw amino-acid sequence, 91 residues long: Small ribosomal subunit protein bS20 (91 aa).

Over residues 1–21 the composition is skewed to basic and acidic residues; the sequence is MPLHKSAEKRLRQSARRNERN. Disordered regions lie at residues 1-25 and 71-91; these read MPLH…RARK and NKAS…AQKD.

Belongs to the bacterial ribosomal protein bS20 family.

Its function is as follows. Binds directly to 16S ribosomal RNA. The polypeptide is Small ribosomal subunit protein bS20 (Prosthecochloris aestuarii (strain DSM 271 / SK 413)).